A 424-amino-acid polypeptide reads, in one-letter code: Proline--tRNA ligase (424 aa).

Belongs to the class-II aminoacyl-tRNA synthetase family. ProS type 2 subfamily. As to quaternary structure, homodimer.

The protein localises to the cytoplasm. It carries out the reaction tRNA(Pro) + L-proline + ATP = L-prolyl-tRNA(Pro) + AMP + diphosphate. Catalyzes the attachment of proline to tRNA(Pro) in a two-step reaction: proline is first activated by ATP to form Pro-AMP and then transferred to the acceptor end of tRNA(Pro). This Ehrlichia chaffeensis (strain ATCC CRL-10679 / Arkansas) protein is Proline--tRNA ligase.